Here is a 301-residue protein sequence, read N- to C-terminus: RNA polymerase II holoenzyme cyclin-like subunit (301 aa).

The 90-residue stretch at 53 to 142 (QQLIKLGKRT…LGECEFALIS (90 aa)) folds into the Cyclin N-terminal domain.

Belongs to the cyclin family. Cyclin C subfamily. Component of the srb8-11 complex, a regulatory module of the Mediator complex.

The protein resides in the nucleus. In terms of biological role, component of the srb8-11 complex. The srb8-11 complex is a regulatory module of the Mediator complex which is itself involved in regulation of basal and activated RNA polymerase II-dependent transcription. The srb8-11 complex may be involved in the transcriptional repression of a subset of genes regulated by Mediator. It may inhibit the association of the Mediator complex with RNA polymerase II to form the holoenzyme complex. The srb8-11 complex phosphorylates the C-terminal domain (CTD) of the largest subunit of RNA polymerase II. In Aspergillus terreus (strain NIH 2624 / FGSC A1156), this protein is RNA polymerase II holoenzyme cyclin-like subunit (ssn8).